Here is a 267-residue protein sequence, read N- to C-terminus: tRNA (guanine-N(1)-)-methyltransferase (267 aa).

Residues G119 and 139-144 (IGDYVL) each bind S-adenosyl-L-methionine.

The protein belongs to the RNA methyltransferase TrmD family. Homodimer.

It localises to the cytoplasm. It catalyses the reaction guanosine(37) in tRNA + S-adenosyl-L-methionine = N(1)-methylguanosine(37) in tRNA + S-adenosyl-L-homocysteine + H(+). In terms of biological role, specifically methylates guanosine-37 in various tRNAs. The polypeptide is tRNA (guanine-N(1)-)-methyltransferase (Chromohalobacter salexigens (strain ATCC BAA-138 / DSM 3043 / CIP 106854 / NCIMB 13768 / 1H11)).